The primary structure comprises 262 residues: Phosphatidylglycerol--prolipoprotein diacylglyceryl transferase (262 aa).

Transmembrane regions (helical) follow at residues 17–37 (FAIH…LLLG), 59–79 (LLFA…TLFY), 94–114 (IWEG…ALYW), and 121–141 (TTFF…LAFG). Arginine 142 contacts a 1,2-diacyl-sn-glycero-3-phospho-(1'-sn-glycerol). 3 helical membrane-spanning segments follow: residues 176–196 (QIYQ…FYAG), 201–221 (VGQV…LAEY), and 231–251 (LLGL…FFGI).

This sequence belongs to the Lgt family.

The protein localises to the cell inner membrane. It carries out the reaction L-cysteinyl-[prolipoprotein] + a 1,2-diacyl-sn-glycero-3-phospho-(1'-sn-glycerol) = an S-1,2-diacyl-sn-glyceryl-L-cysteinyl-[prolipoprotein] + sn-glycerol 1-phosphate + H(+). Its pathway is protein modification; lipoprotein biosynthesis (diacylglyceryl transfer). Its function is as follows. Catalyzes the transfer of the diacylglyceryl group from phosphatidylglycerol to the sulfhydryl group of the N-terminal cysteine of a prolipoprotein, the first step in the formation of mature lipoproteins. The chain is Phosphatidylglycerol--prolipoprotein diacylglyceryl transferase from Polynucleobacter necessarius subsp. necessarius (strain STIR1).